The following is an 860-amino-acid chain: DNA mismatch repair protein MutS (860 aa).

607–614 (GPNMSGKS) provides a ligand contact to ATP.

The protein belongs to the DNA mismatch repair MutS family.

This protein is involved in the repair of mismatches in DNA. It is possible that it carries out the mismatch recognition step. This protein has a weak ATPase activity. This chain is DNA mismatch repair protein MutS, found in Listeria welshimeri serovar 6b (strain ATCC 35897 / DSM 20650 / CCUG 15529 / CIP 8149 / NCTC 11857 / SLCC 5334 / V8).